Reading from the N-terminus, the 320-residue chain is Stress-involved WYL domain-containing regulator (320 aa).

In terms of domain architecture, HTH deoR-type spans 7 to 65 (TTGRVVQLLGLLQSRRVWTGEELAERLGVTGRSVRRDIERLRELGYPVHASKGQGGGYQ). Residues 24-43 (WTGEELAERLGVTGRSVRRD) constitute a DNA-binding region (H-T-H motif). In terms of domain architecture, WYL spans 139 to 218 (DTAVAPDVLM…SDVRATGTTF (80 aa)). The WCX domain stretch occupies residues 245 to 320 (VRYFAPEKVV…MADRLRRAVR (76 aa)).

Homodimer.

In terms of biological role, transcriptional activator. Acts as a transcriptional activator of the MSMEG_1357-56 operon upon genotoxic stress. Controls adjacent genes that belong to the DinB/YfiT-like putative metalloenzymes superfamily by upregulating their expression in response to various genotoxic stress conditions, including exposure to H(2)O(2) or the natural antibiotic zeocin, as well as mitomycin C (MMC), diamide and UVC radiation. Upon genotoxic stress, upregulates two genes encoding proteins of the DinB/YfiT-like putative metalloenzymes superfamily, MSMEG_1357 and MSMEG_1356. Binds different forms of single-stranded DNA (ssDNA) with high affinity, primarily through its characteristic WYL domain. Binds nucleic acids with single-stranded regions, such as polyT 20mer ssDNA, 5' tailed, 3' tailed and fork DNA, but not ssRNA. The protein is Stress-involved WYL domain-containing regulator of Mycolicibacterium smegmatis (strain ATCC 700084 / mc(2)155) (Mycobacterium smegmatis).